We begin with the raw amino-acid sequence, 718 residues long: Polyribonucleotide nucleotidyltransferase (718 aa).

Mg(2+) is bound by residues aspartate 493 and aspartate 499. Residues 560-619 (PRMITIKINPEKIRDVIGKGGSVIRALTEETGTTIDISDDGVVTIASTSSEGMAEAKKRI) form the KH domain. The S1 motif domain maps to 629–697 (GQVYEGTVLK…EKGRVRLSAK (69 aa)).

The protein belongs to the polyribonucleotide nucleotidyltransferase family. The cofactor is Mg(2+).

It localises to the cytoplasm. It carries out the reaction RNA(n+1) + phosphate = RNA(n) + a ribonucleoside 5'-diphosphate. Its function is as follows. Involved in mRNA degradation. Catalyzes the phosphorolysis of single-stranded polyribonucleotides processively in the 3'- to 5'-direction. This is Polyribonucleotide nucleotidyltransferase from Paraburkholderia phytofirmans (strain DSM 17436 / LMG 22146 / PsJN) (Burkholderia phytofirmans).